Consider the following 175-residue polypeptide: Large ribosomal subunit protein uL6 (175 aa).

The protein belongs to the universal ribosomal protein uL6 family. Part of the 50S ribosomal subunit.

In terms of biological role, this protein binds to the 23S rRNA, and is important in its secondary structure. It is located near the subunit interface in the base of the L7/L12 stalk, and near the tRNA binding site of the peptidyltransferase center. The polypeptide is Large ribosomal subunit protein uL6 (Xanthomonas oryzae pv. oryzae (strain MAFF 311018)).